An 87-amino-acid polypeptide reads, in one-letter code: Elongation factor Ts, chloroplastic (87 aa).

It belongs to the EF-Ts family.

It is found in the plastid. Its subcellular location is the chloroplast. Functionally, associates with the EF-Tu.GDP complex and induces the exchange of GDP to GTP. It remains bound to the aminoacyl-tRNA.EF-Tu.GTP complex up to the GTP hydrolysis stage on the ribosome. This Antithamnion sp. (Red alga) protein is Elongation factor Ts, chloroplastic (tsf).